A 503-amino-acid polypeptide reads, in one-letter code: Maturase K (503 aa).

The protein belongs to the intron maturase 2 family. MatK subfamily.

It localises to the plastid. Its subcellular location is the chloroplast. Usually encoded in the trnK tRNA gene intron. Probably assists in splicing its own and other chloroplast group II introns. The chain is Maturase K from Cercocarpus betuloides (Mountain mahogany).